Consider the following 331-residue polypeptide: N-arachidonyl glycine receptor (331 aa).

Topologically, residues 1–26 (MATLSNHNQLDLSNGSHPEEYKIAAL) are extracellular. An N-linked (GlcNAc...) asparagine glycan is attached at asparagine 14. The chain crosses the membrane as a helical span at residues 27 to 47 (VFYSCIFLIGLFVNVTALWVF). The Cytoplasmic segment spans residues 48 to 56 (SCTTKKRTT). A helical transmembrane segment spans residues 57-77 (VTIYMMNVALLDLVFILSLPF). The Extracellular segment spans residues 78 to 95 (RMFYYAKGEWPFGEYFCH). Cysteines 94 and 172 form a disulfide. A helical transmembrane segment spans residues 96 to 116 (ILGALVVFYPSLALWLLAFIS). Residues 117–138 (ADRYMAIVQPKYAKELKNTGKA) lie on the Cytoplasmic side of the membrane. A helical membrane pass occupies residues 139 to 159 (VLACGGVWVMTLTTTVPLLLL). Residues 160–191 (YEDPDKASSPATCLKISDITHLKAVNVLNFTR) lie on the Extracellular side of the membrane. A glycan (N-linked (GlcNAc...) asparagine) is linked at asparagine 188. A helical transmembrane segment spans residues 192-212 (LIFFFLIPLFIMIGCYVVIIH). Residues 213 to 236 (SLLRGQTSKLKPKVKEKSIRIIMT) lie on the Cytoplasmic side of the membrane. The helical transmembrane segment at 237–257 (LLLQVLVCFVPFHICFAVLML) threads the bilayer. Topologically, residues 258 to 268 (QGQENSYSPWG) are extracellular. A helical membrane pass occupies residues 269–289 (AFTTFLMNLSTCLDVVLYYIV). Residues 290–331 (SKQFQARVISVMLYRNYLRSVRRKSVRSGSLRSLSNMNSEML) lie on the Cytoplasmic side of the membrane. At serine 322 the chain carries Phosphoserine.

The protein belongs to the G-protein coupled receptor 1 family. In terms of tissue distribution, expressed in the eye including cornea, retina, iris and ciliary epithelium (at protein level). Expressed in spleen, liver and lymphocytes with highest expression levels in intestinal intraepithelial lymphocytes.

The protein resides in the cell membrane. The protein localises to the cytoplasmic vesicle membrane. Functionally, g protein-coupled receptor (GPCR) that plays a role in diverse physiological processes particularly within the immune and nervous systems. Becomes active when triggered by various endogenous ligands including endocannabinoid N-arachidonyl glycine (NAGly), delta-9-tetrahydrocannabinol or resolvin D2/RvD2 derived from the omega-3 fatty acid docosahexaenoic acid (DHA). Upon RvD2 binding, facilitates the resolution of inflammation, aiding in tissue repair and homeostasis. Mechanistically, RvD2 ligation initiates Galphas protein coupling, activation of cAMP-PKA signaling pathway and phosphorylation of STAT3, leading to RvD2-stimulated macrophage phagocytosis. Mediates NAGly-induced process of reorganization of actin filaments and induction of acrosomal exocytosis. Activation by N-arachidonoyl glycine (NAGly) can also induce apoptosis in macrophages. Plays a role in homeostasis of CD8+ subsets of intraepithelial lymphocytes (IELs) (CD8alphaalpha and CD8alphabeta IELs) in small intestine by supporting preferential migration of CD8alphaalpha T-cells to intraepithelial compartment over lamina propria compartment, and by mediating their reconstitution into small intestine after bone marrow transplant. Also participates in hypotensive responses, mediating reduction in intraocular and blood pressure. The sequence is that of N-arachidonyl glycine receptor from Mus musculus (Mouse).